We begin with the raw amino-acid sequence, 387 residues long: Methionine aminopeptidase 1 (387 aa).

Ser-2 is modified (N-acetylserine). A propeptide spanning residues 2–10 is cleaved from the precursor; sequence STATTTVTT. Residues 19–73 form a C6H2-type zinc finger; sequence KIYCSGLQCGRETSSQMKCPVCLKQGIVSIFCDTSCYENNYKAHKALHNAKDGLE. Cys-22, Cys-27, Cys-37, Cys-40, Cys-50, Cys-54, His-62, and His-66 together coordinate Zn(2+). An a protein-binding site is contributed by His-202. The Zn(2+) site is built by Asp-219, Asp-230, and His-294. His-301 provides a ligand contact to a protein. Zn(2+) contacts are provided by Glu-327 and Glu-358.

Belongs to the peptidase M24A family. Methionine aminopeptidase type 1 subfamily. As to quaternary structure, associates with the 60S ribosomal subunit of the 80S translational complex. Zn(2+) is required as a cofactor. It depends on Co(2+) as a cofactor. Mn(2+) serves as cofactor. The cofactor is Fe(2+).

The protein resides in the cytoplasm. The catalysed reaction is Release of N-terminal amino acids, preferentially methionine, from peptides and arylamides.. In contract to the MetAP 2 isoform, is not inhibited by the fungal metabolite fumagillin, an antiangiogenic drug. Functionally, cotranslationally removes the N-terminal methionine from nascent proteins. The N-terminal methionine is often cleaved when the second residue in the primary sequence is small and uncharged (Met-Ala-, Cys, Gly, Pro, Ser, Thr, or Val). Plays the major role in N-terminal methionine removal. Less efficient when the second residue is Val. The chain is Methionine aminopeptidase 1 (MAP1) from Saccharomyces cerevisiae (strain ATCC 204508 / S288c) (Baker's yeast).